We begin with the raw amino-acid sequence, 414 residues long: Sex comb on midleg-like protein 4 (414 aa).

Phosphoserine occurs at positions 55 and 65. Over residues 257-276 (HRGSLHPSSSLYCKRQNSGD) the composition is skewed to polar residues. Residues 257-343 (HRGSLHPSSS…DARRPRSRNP (87 aa)) form a disordered region. The segment covering 284-304 (AATAGGPRTSPMSSGGPSAPG) has biased composition (low complexity). The SAM domain maps to 288-354 (GGPRTSPMSS…AWTVEDVVWF (67 aa)). A compositionally biased stretch (polar residues) spans 312–332 (PKRNTTSLEGNRCASSPSQDA).

It belongs to the SCM family.

The protein localises to the nucleus. Its function is as follows. Putative Polycomb group (PcG) protein. PcG proteins act by forming multiprotein complexes, which are required to maintain the transcriptionally repressive state of homeotic genes throughout development. This chain is Sex comb on midleg-like protein 4 (SCML4), found in Homo sapiens (Human).